The chain runs to 248 residues: Mannose-binding protein C (248 aa).

A signal peptide spans 1–20 (MSLFPSLPLLLLSMVAASYS). One can recognise a Collagen-like domain in the interval 42–99 (GINGFPGKDGRDGTKGEKGEPGQGLRGLQGPPGKLGPPGNPGPSGSPGPKGQKGDPGK). A disordered region spans residues 43 to 113 (INGFPGKDGR…DSSLAASERK (71 aa)). Pro47 is subject to 4-hydroxyproline. Positions 49–61 (KDGRDGTKGEKGE) are enriched in basic and acidic residues. 4-hydroxyproline is present on residues Pro73, Pro79, Pro82, and Pro88. The segment covering 75-87 (KLGPPGNPGPSGS) has biased composition (pro residues). Over residues 93 to 102 (QKGDPGKSPD) the composition is skewed to basic and acidic residues. Residues 112–130 (RKALQTEMARIKKWLTFSL) adopt a coiled-coil conformation. The region spanning 134 to 245 (VGNKFFLTNG…CSTSHLAVCE (112 aa)) is the C-type lectin domain. Cystine bridges form between Cys155/Cys244 and Cys222/Cys236.

As to quaternary structure, oligomeric complex of 3 or more homotrimers. Interacts with MASP1 and MASP2. Interacts with MEP1A and MEP1B and may inhibit their catalytic activity. In terms of processing, hydroxylation on proline residues within the sequence motif, GXPG, is most likely to be 4-hydroxy as this fits the requirement for 4-hydroxylation in vertebrates.

The protein resides in the secreted. Its function is as follows. Calcium-dependent lectin involved in innate immune defense. Binds mannose, fucose and N-acetylglucosamine on different microorganisms and activates the lectin complement pathway. Binds to late apoptotic cells, as well as to apoptotic blebs and to necrotic cells, but not to early apoptotic cells, facilitating their uptake by macrophages. The sequence is that of Mannose-binding protein C (MBL2) from Gorilla gorilla gorilla (Western lowland gorilla).